Consider the following 870-residue polypeptide: Glycerol-3-phosphate acyltransferase (870 aa).

Positions 1–27 are disordered; that stretch reads MPKKNSPLLPKETTPTQSSVDTSGSSN. Residues 13 to 27 show a composition bias toward polar residues; the sequence is TTPTQSSVDTSGSSN. An HXXXXD motif motif is present at residues 351 to 356; the sequence is HRSHID.

It belongs to the GPAT/DAPAT family.

It localises to the cell inner membrane. The catalysed reaction is sn-glycerol 3-phosphate + an acyl-CoA = a 1-acyl-sn-glycero-3-phosphate + CoA. It functions in the pathway phospholipid metabolism; CDP-diacylglycerol biosynthesis; CDP-diacylglycerol from sn-glycerol 3-phosphate: step 1/3. The polypeptide is Glycerol-3-phosphate acyltransferase (plsB) (Xylella fastidiosa (strain 9a5c)).